An 865-amino-acid polypeptide reads, in one-letter code: Prominin-1 (865 aa).

A signal peptide spans 1–19; it reads MALVLGSLLLLGLCGNSFS. Over 20–108 the chain is Extracellular; the sequence is GGQPSSTDAP…GLKIVYYEAG (89 aa). A helical membrane pass occupies residues 109 to 129; it reads IILCCVLGLLFIILMPLVGYF. The Cytoplasmic segment spans residues 130-157; it reads FCMCRCCNKCGGEMHQRQKENGPFLRKC. A helical transmembrane segment spans residues 158-178; that stretch reads FAISLLVICIIISIGIFYGFV. At 179–433 the chain is on the extracellular side; it reads ANHQVRTRIK…LPTLEEYDSY (255 aa). A glycan (N-linked (GlcNAc...) asparagine) is linked at Asn-220. N6-acetyllysine occurs at positions 225, 257, and 264. N-linked (GlcNAc...) asparagine glycosylation is found at Asn-274, Asn-395, and Asn-414. A helical membrane pass occupies residues 434 to 454; the sequence is WWLGGLVICSLLTLIVIFYYL. Residues 455 to 486 lie on the Cytoplasmic side of the membrane; that stretch reads GLLCGVCGYDRHATPTTRGCVSNTGGVFLMVG. Residues 487-507 form a helical membrane-spanning segment; it reads VGLSFLFCWILMIIVVLTFVF. Topologically, residues 508–792 are extracellular; it reads GANVEKLICE…LCSYIIDPLN (285 aa). Residues Asn-548, Asn-580, Asn-729, and Asn-730 are each glycosylated (N-linked (GlcNAc...) asparagine). Residues 793-813 traverse the membrane as a helical segment; it reads LFWFGIGKATVFLLPALIFAV. The Cytoplasmic segment spans residues 814-865; the sequence is KLAKYYRRMDSEDVYDDVETIPMKNMENGNNGYHKDHVYGIHNPVMTSPSQH. Ser-863 is modified (phosphoserine).

This sequence belongs to the prominin family. As to quaternary structure, interacts with CDHR1 and with actin filaments. Interacts with NAT8 and NAT8B. Post-translationally, isoform 1 and isoform 2 are glycosylated. Acetylation at Lys-225, Lys-257 and Lys-264 by NAT8 and NAT8B may control PROM1 protein expression and its function in cell apoptosis. In terms of tissue distribution, isoform 1 is selectively expressed on CD34 hematopoietic stem and progenitor cells in adult and fetal bone marrow, fetal liver, cord blood and adult peripheral blood. Isoform 1 is not detected on other blood cells. Isoform 1 is also expressed in a number of non-lymphoid tissues including retina, pancreas, placenta, kidney, liver, lung, brain and heart. Found in saliva within small membrane particles. Isoform 2 is predominantly expressed in fetal liver, skeletal muscle, kidney, and heart as well as adult pancreas, kidney, liver, lung, and placenta. Isoform 2 is highly expressed in fetal liver, low in bone marrow, and barely detectable in peripheral blood. Isoform 2 is expressed on hematopoietic stem cells and in epidermal basal cells (at protein level). Expressed in adult retina by rod and cone photoreceptor cells (at protein level).

The protein localises to the apical cell membrane. It is found in the cell projection. The protein resides in the microvillus membrane. It localises to the cilium. Its subcellular location is the photoreceptor outer segment. The protein localises to the endoplasmic reticulum. It is found in the endoplasmic reticulum-Golgi intermediate compartment. Functionally, may play a role in cell differentiation, proliferation and apoptosis. Binds cholesterol in cholesterol-containing plasma membrane microdomains and may play a role in the organization of the apical plasma membrane in epithelial cells. During early retinal development acts as a key regulator of disk morphogenesis. Involved in regulation of MAPK and Akt signaling pathways. In neuroblastoma cells suppresses cell differentiation such as neurite outgrowth in a RET-dependent manner. The chain is Prominin-1 (PROM1) from Homo sapiens (Human).